Reading from the N-terminus, the 62-residue chain is MRCVPVFIILLLLIPSASSVDVQPLTRDDVPLASFLDDARRTLRSPWMTRRCCPGNFACCGK.

The signal sequence occupies residues Met1–Ser19. A propeptide spanning residues Val20–Arg50 is cleaved from the precursor.

It belongs to the conotoxin T superfamily. Post-translationally, contains 2 disulfide bonds that can be either 'C1-C3, C2-C4' or 'C1-C4, C2-C3', since these disulfide connectivities have been observed for conotoxins with cysteine framework V (for examples, see AC P0DQQ7 and AC P81755). As to expression, expressed by the venom duct.

The protein resides in the secreted. The protein is Conotoxin Mi5.2 of Conus miles (Soldier cone).